Here is a 137-residue protein sequence, read N- to C-terminus: Large ribosomal subunit protein uL16 (137 aa).

Belongs to the universal ribosomal protein uL16 family. As to quaternary structure, part of the 50S ribosomal subunit.

Functionally, binds 23S rRNA and is also seen to make contacts with the A and possibly P site tRNAs. This Coxiella burnetii (strain RSA 331 / Henzerling II) protein is Large ribosomal subunit protein uL16.